The following is a 392-amino-acid chain: Imidazolonepropionase (392 aa).

2 residues coordinate Fe(3+): His69 and His71. Zn(2+) is bound by residues His69 and His71. Positions 78, 136, and 163 each coordinate 4-imidazolone-5-propanoate. Tyr136 contacts N-formimidoyl-L-glutamate. Residue His226 coordinates Fe(3+). Zn(2+) is bound at residue His226. Residue Gln229 participates in 4-imidazolone-5-propanoate binding. Asp302 serves as a coordination point for Fe(3+). Position 302 (Asp302) interacts with Zn(2+). Residues Asn304 and Gly306 each contribute to the N-formimidoyl-L-glutamate site. Ser307 serves as a coordination point for 4-imidazolone-5-propanoate.

This sequence belongs to the metallo-dependent hydrolases superfamily. HutI family. The cofactor is Zn(2+). It depends on Fe(3+) as a cofactor.

It localises to the cytoplasm. The enzyme catalyses 4-imidazolone-5-propanoate + H2O = N-formimidoyl-L-glutamate. It participates in amino-acid degradation; L-histidine degradation into L-glutamate; N-formimidoyl-L-glutamate from L-histidine: step 3/3. Catalyzes the hydrolytic cleavage of the carbon-nitrogen bond in imidazolone-5-propanoate to yield N-formimidoyl-L-glutamate. It is the third step in the universal histidine degradation pathway. This chain is Imidazolonepropionase, found in Salinispora arenicola (strain CNS-205).